A 525-amino-acid polypeptide reads, in one-letter code: ATP synthase subunit alpha (525 aa).

172–179 (GDRQTGKT) lines the ATP pocket.

The protein belongs to the ATPase alpha/beta chains family. In terms of assembly, F-type ATPases have 2 components, CF(1) - the catalytic core - and CF(0) - the membrane proton channel. CF(1) has five subunits: alpha(3), beta(3), gamma(1), delta(1), epsilon(1). CF(0) has three main subunits: a(1), b(2) and c(9-12). The alpha and beta chains form an alternating ring which encloses part of the gamma chain. CF(1) is attached to CF(0) by a central stalk formed by the gamma and epsilon chains, while a peripheral stalk is formed by the delta and b chains.

It is found in the cell inner membrane. The enzyme catalyses ATP + H2O + 4 H(+)(in) = ADP + phosphate + 5 H(+)(out). In terms of biological role, produces ATP from ADP in the presence of a proton gradient across the membrane. The alpha chain is a regulatory subunit. This Parabacteroides distasonis (strain ATCC 8503 / DSM 20701 / CIP 104284 / JCM 5825 / NCTC 11152) protein is ATP synthase subunit alpha.